The primary structure comprises 207 residues: Guanylate kinase (207 aa).

The region spanning 3–181 (GQLFVICGPS…AVEMVVSIVR (179 aa)) is the Guanylate kinase-like domain. 10–17 (GPSGAGKT) is a binding site for ATP.

The protein belongs to the guanylate kinase family.

Its subcellular location is the cytoplasm. The enzyme catalyses GMP + ATP = GDP + ADP. Essential for recycling GMP and indirectly, cGMP. The sequence is that of Guanylate kinase (gmk) from Thermotoga maritima (strain ATCC 43589 / DSM 3109 / JCM 10099 / NBRC 100826 / MSB8).